Consider the following 225-residue polypeptide: tRNA (guanine-N(1)-)-methyltransferase (225 aa).

S-adenosyl-L-methionine is bound by residues Gly112 and 132–137 (IGDYVL).

It belongs to the RNA methyltransferase TrmD family. As to quaternary structure, homodimer.

The protein localises to the cytoplasm. It catalyses the reaction guanosine(37) in tRNA + S-adenosyl-L-methionine = N(1)-methylguanosine(37) in tRNA + S-adenosyl-L-homocysteine + H(+). Its function is as follows. Specifically methylates guanosine-37 in various tRNAs. In Bacteroides fragilis (strain ATCC 25285 / DSM 2151 / CCUG 4856 / JCM 11019 / LMG 10263 / NCTC 9343 / Onslow / VPI 2553 / EN-2), this protein is tRNA (guanine-N(1)-)-methyltransferase.